Consider the following 184-residue polypeptide: Cytosolic Prostaglandin E synthase (184 aa).

The 90-residue stretch at 7–96 folds into the CS domain; it reads LIPPPVSWAQ…AAGPYWSSLT (90 aa). Positions 115-184 are disordered; that stretch reads ESDDEEGDQK…EGDKEKKPAA (70 aa). A phosphoserine mark is found at Ser116, Ser127, Ser135, Ser156, and Ser162. The span at 147–158 shows a compositional bias: acidic residues; the sequence is FNVDDEEEDSDD. Residues 175–184 show a composition bias toward basic and acidic residues; that stretch reads EGDKEKKPAA.

Belongs to the p23/wos2 family.

The protein localises to the cytoplasm. The catalysed reaction is prostaglandin H2 = prostaglandin E2. Functionally, cytosolic prostaglandin synthase that catalyzes the oxidoreduction of prostaglandin endoperoxide H2 (PGH2) to prostaglandin E2 (PGE2). Through production of PGE2 may regulate the activity of non-muscle myosin II in an autocrine or paracrine fashion; this may influence border cell and nurse cell stiffness to facilitate border cell migration during oogenesis. The sequence is that of Cytosolic Prostaglandin E synthase from Drosophila melanogaster (Fruit fly).